The chain runs to 264 residues: Ribosome-recycling factor, mitochondrial (264 aa).

It belongs to the RRF family.

The protein localises to the mitochondrion. Necessary for protein synthesis in mitochondria. Functions as a ribosome recycling factor in mitochondria. The chain is Ribosome-recycling factor, mitochondrial (RRF1) from Yarrowia lipolytica (strain CLIB 122 / E 150) (Yeast).